The sequence spans 80 residues: Cytochrome c oxidase subunit 7B, mitochondrial (80 aa).

Residues 1-24 constitute a mitochondrion transit peptide; it reads MFPLAKNALSRLRVQSIQQAVARQ. The Mitochondrial matrix portion of the chain corresponds to 25-32; that stretch reads IHQKRAPD. Residues 33 to 59 traverse the membrane as a helical segment; the sequence is FHDKYGNAVLASGATFCVAVWVYMATQ. Over 60 to 80 the chain is Mitochondrial intermembrane; that stretch reads IGIEWNPSPVGRVTPKEWREQ.

The protein belongs to the cytochrome c oxidase VIIb family. Component of the cytochrome c oxidase (complex IV, CIV), a multisubunit enzyme composed of 14 subunits. The complex is composed of a catalytic core of 3 subunits MT-CO1, MT-CO2 and MT-CO3, encoded in the mitochondrial DNA, and 11 supernumerary subunits COX4I1 (or COX4I2), COX5A, COX5B, COX6A2 (or COX6A1), COX6B1 (or COX6B2), COX6C, COX7A1 (or COX7A2), COX7B, COX7C, COX8B and NDUFA4, which are encoded in the nuclear genome. The complex exists as a monomer or a dimer and forms supercomplexes (SCs) in the inner mitochondrial membrane with NADH-ubiquinone oxidoreductase (complex I, CI) and ubiquinol-cytochrome c oxidoreductase (cytochrome b-c1 complex, complex III, CIII), resulting in different assemblies (supercomplex SCI(1)III(2)IV(1) and megacomplex MCI(2)III(2)IV(2)).

It localises to the mitochondrion inner membrane. Its pathway is energy metabolism; oxidative phosphorylation. Component of the cytochrome c oxidase, the last enzyme in the mitochondrial electron transport chain which drives oxidative phosphorylation. The respiratory chain contains 3 multisubunit complexes succinate dehydrogenase (complex II, CII), ubiquinol-cytochrome c oxidoreductase (cytochrome b-c1 complex, complex III, CIII) and cytochrome c oxidase (complex IV, CIV), that cooperate to transfer electrons derived from NADH and succinate to molecular oxygen, creating an electrochemical gradient over the inner membrane that drives transmembrane transport and the ATP synthase. Cytochrome c oxidase is the component of the respiratory chain that catalyzes the reduction of oxygen to water. Electrons originating from reduced cytochrome c in the intermembrane space (IMS) are transferred via the dinuclear copper A center (CU(A)) of subunit 2 and heme A of subunit 1 to the active site in subunit 1, a binuclear center (BNC) formed by heme A3 and copper B (CU(B)). The BNC reduces molecular oxygen to 2 water molecules using 4 electrons from cytochrome c in the IMS and 4 protons from the mitochondrial matrix. Plays a role in proper central nervous system (CNS) development in vertebrates. In Bos taurus (Bovine), this protein is Cytochrome c oxidase subunit 7B, mitochondrial (COX7B).